Reading from the N-terminus, the 471-residue chain is Proline--tRNA ligase (471 aa).

This sequence belongs to the class-II aminoacyl-tRNA synthetase family. ProS type 3 subfamily. Homodimer.

Its subcellular location is the cytoplasm. The enzyme catalyses tRNA(Pro) + L-proline + ATP = L-prolyl-tRNA(Pro) + AMP + diphosphate. In terms of biological role, catalyzes the attachment of proline to tRNA(Pro) in a two-step reaction: proline is first activated by ATP to form Pro-AMP and then transferred to the acceptor end of tRNA(Pro). The polypeptide is Proline--tRNA ligase (Archaeoglobus fulgidus (strain ATCC 49558 / DSM 4304 / JCM 9628 / NBRC 100126 / VC-16)).